A 444-amino-acid polypeptide reads, in one-letter code: Glycogen synthase (444 aa).

Arginine 15 is a binding site for ADP-alpha-D-glucose.

The protein belongs to the glycosyltransferase 1 family. Bacterial/plant glycogen synthase subfamily.

The catalysed reaction is [(1-&gt;4)-alpha-D-glucosyl](n) + ADP-alpha-D-glucose = [(1-&gt;4)-alpha-D-glucosyl](n+1) + ADP + H(+). It functions in the pathway glycan biosynthesis; glycogen biosynthesis. Synthesizes alpha-1,4-glucan chains using ADP-glucose. This is Glycogen synthase from Deinococcus radiodurans (strain ATCC 13939 / DSM 20539 / JCM 16871 / CCUG 27074 / LMG 4051 / NBRC 15346 / NCIMB 9279 / VKM B-1422 / R1).